The chain runs to 318 residues: Methionyl-tRNA formyltransferase (318 aa).

117-120 (SLLP) contacts (6S)-5,6,7,8-tetrahydrofolate.

This sequence belongs to the Fmt family.

The enzyme catalyses L-methionyl-tRNA(fMet) + (6R)-10-formyltetrahydrofolate = N-formyl-L-methionyl-tRNA(fMet) + (6S)-5,6,7,8-tetrahydrofolate + H(+). Functionally, attaches a formyl group to the free amino group of methionyl-tRNA(fMet). The formyl group appears to play a dual role in the initiator identity of N-formylmethionyl-tRNA by promoting its recognition by IF2 and preventing the misappropriation of this tRNA by the elongation apparatus. The sequence is that of Methionyl-tRNA formyltransferase from Malacoplasma penetrans (strain HF-2) (Mycoplasma penetrans).